Here is a 423-residue protein sequence, read N- to C-terminus: Maltooligosaccharide ABC transporter solute-binding lipoprotein (423 aa).

Positions 1–24 (MSSKFMKSAAVLGTATLASLLLVA) are cleaved as a signal peptide. The N-palmitoyl cysteine moiety is linked to residue C25. A lipid anchor (S-diacylglycerol cysteine) is attached at C25. Substrate is bound by residues Y52, D77, D83, 103–104 (DR), E148, D193, N196, 251–254 (EGAG), W274, and K307.

Belongs to the bacterial solute-binding protein 1 family.

It is found in the cell membrane. Functionally, part of an ABC transporter complex involved in the uptake of maltodextrins. Binds glycogen-derived linear maltooligosaccharides increasing in size from maltotriose to maltooctaose with the highest affinity for maltotriose. Has a very weak affinity for maltose. Has also a very low affinity for maltotetraitol, indicating that the binding is selective for maltooligosaccharides with an intact reducing end. The protein is Maltooligosaccharide ABC transporter solute-binding lipoprotein of Streptococcus pneumoniae serotype 4 (strain ATCC BAA-334 / TIGR4).